Here is a 301-residue protein sequence, read N- to C-terminus: Protein phosphatase 1 regulatory subunit 3B (301 aa).

The PP1-binding motif motif lies at 79-82 (RVSF). Positions 142–250 (RNRLQAESVC…SNKGLNYRIV (109 aa)) constitute a CBM21 domain.

As to quaternary structure, interacts with glycogen, PPP1CC catalytic subunit of PP1 and PYGL. Associates with glycogen particles. Forms complexes with debranching enzyme, glycogen phosphorylase, glycogen synthase and phosphorylase kinase which is necessary for its regulation of PP1 activity.

In terms of biological role, acts as a glycogen-targeting subunit for phosphatase PP1. Facilitates interaction of the PP1 with enzymes of the glycogen metabolism and regulates its activity. Suppresses the rate at which PP1 dephosphorylates (inactivates) glycogen phosphorylase and enhances the rate at which it activates glycogen synthase and therefore limits glycogen breakdown. This chain is Protein phosphatase 1 regulatory subunit 3B (ppp1r3b), found in Xenopus tropicalis (Western clawed frog).